Here is a 273-residue protein sequence, read N- to C-terminus: Putative pyruvate, phosphate dikinase regulatory protein (273 aa).

ADP is bound at residue glycine 153–threonine 160.

It belongs to the pyruvate, phosphate/water dikinase regulatory protein family. PDRP subfamily.

The catalysed reaction is N(tele)-phospho-L-histidyl/L-threonyl-[pyruvate, phosphate dikinase] + ADP = N(tele)-phospho-L-histidyl/O-phospho-L-threonyl-[pyruvate, phosphate dikinase] + AMP + H(+). The enzyme catalyses N(tele)-phospho-L-histidyl/O-phospho-L-threonyl-[pyruvate, phosphate dikinase] + phosphate + H(+) = N(tele)-phospho-L-histidyl/L-threonyl-[pyruvate, phosphate dikinase] + diphosphate. In terms of biological role, bifunctional serine/threonine kinase and phosphorylase involved in the regulation of the pyruvate, phosphate dikinase (PPDK) by catalyzing its phosphorylation/dephosphorylation. The sequence is that of Putative pyruvate, phosphate dikinase regulatory protein from Rhizobium meliloti (strain 1021) (Ensifer meliloti).